The sequence spans 597 residues: Plasmepsin V (597 aa).

Residues 1 to 551 lie on the Lumenal side of the membrane; sequence MNNYFLRKEN…EKENIFLKVS (551 aa). Residues 33 to 88 are a coiled coil; the sequence is CNNVENKIDNVGKKIENVGKKIGDMENKNDNVENKNDNVENKNDNVGNKNDNVKNA. Over residues 58–75 the composition is skewed to basic and acidic residues; it reads ENKNDNVENKNDNVENKN. The segment at 58-83 is disordered; sequence ENKNDNVENKNDNVENKNDNVGNKND. Positions 107–521 constitute a Peptidase A1 domain; sequence YFLDIDIGKP…DLQQNQIAFI (415 aa). D125 is an active-site residue. 7 disulfide bridges follow: C135-C218, C138-C141, C162-C173, C167-C178, C266-C525, C396-C441, and C450-C486. The segment covering 289–298 has biased composition (basic and acidic residues); the sequence is KEKQKMDKSD. A disordered region spans residues 289–323; it reads KEKQKMDKSDNNSSNKGNVSIKLKNNDKNDDEENN. Residues 299-311 are compositionally biased toward low complexity; the sequence is NNSSNKGNVSIKL. The active site involves D372. The helical transmembrane segment at 552-572 threads the bilayer; sequence YINLYCLWLLLALTILLSLIL. Topologically, residues 573 to 597 are cytoplasmic; it reads YVRKMFYMDYFPLSDQNKSPIQEST.

This sequence belongs to the peptidase A1 family. In terms of assembly, component of a complex composed of SPC25 and PMV; the interaction is mediated via the transmembrane domains. The complex interacts with the SEC61 channel-forming translocon complex and is involved in the recognition and import of PEXEL motif-containing proteins into the ER for subsequent export. It is not clear if the zymogen has a cleavable propeptide. In vitro, appears to be cleaved between Asn-87 and Ala-88. Cleavage of the putative propeptide is dispensable for catalytic activity.

It localises to the endoplasmic reticulum membrane. During the asexual blood stage, plays an essential role in the export of several proteins into the host erythrocytes by cleaving the pentameric localization motif RxLxE/Q/D (termed Plasmodium export element (PEXEL)) located downstream of the N-terminal secretory signal sequence. Specifically, cleaves after the leucine residue in the RxLxE/Q/D (or RxLxxE) motif of exported proteins including RESA, EMP2, EMP3, KAHRP, RIF/Rifin and STEVOR. Also, by regulating protein export, plays an essential role in gametocyte development and thus parasite transmission to the mosquito vector. The protein is Plasmepsin V of Plasmodium falciparum (isolate HB3).